The sequence spans 273 residues: Dermonecrotic toxin LapSicTox-alphaIB1b2 (273 aa).

Histidine 5 is a catalytic residue. The Mg(2+) site is built by glutamate 25 and aspartate 27. The Nucleophile role is filled by histidine 41. Disulfide bonds link cysteine 45–cysteine 51 and cysteine 47–cysteine 190. Mg(2+) is bound at residue aspartate 85. Asparagine 250 carries N-linked (GlcNAc...) asparagine glycosylation.

The protein belongs to the arthropod phospholipase D family. Class II subfamily. Mg(2+) serves as cofactor. Expressed by the venom gland.

It localises to the secreted. It carries out the reaction an N-(acyl)-sphingosylphosphocholine = an N-(acyl)-sphingosyl-1,3-cyclic phosphate + choline. The enzyme catalyses an N-(acyl)-sphingosylphosphoethanolamine = an N-(acyl)-sphingosyl-1,3-cyclic phosphate + ethanolamine. It catalyses the reaction a 1-acyl-sn-glycero-3-phosphocholine = a 1-acyl-sn-glycero-2,3-cyclic phosphate + choline. The catalysed reaction is a 1-acyl-sn-glycero-3-phosphoethanolamine = a 1-acyl-sn-glycero-2,3-cyclic phosphate + ethanolamine. Its function is as follows. Dermonecrotic toxins cleave the phosphodiester linkage between the phosphate and headgroup of certain phospholipids (sphingolipid and lysolipid substrates), forming an alcohol (often choline) and a cyclic phosphate. This toxin acts on sphingomyelin (SM). It may also act on ceramide phosphoethanolamine (CPE), lysophosphatidylcholine (LPC) and lysophosphatidylethanolamine (LPE), but not on lysophosphatidylserine (LPS), and lysophosphatidylglycerol (LPG). It acts by transphosphatidylation, releasing exclusively cyclic phosphate products as second products. Induces dermonecrosis, hemolysis, increased vascular permeability, edema, inflammatory response, and platelet aggregation. This chain is Dermonecrotic toxin LapSicTox-alphaIB1b2, found in Loxosceles apachea (Apache recluse spider).